The following is a 95-amino-acid chain: Co-chaperonin GroES (95 aa).

Belongs to the GroES chaperonin family. In terms of assembly, heptamer of 7 subunits arranged in a ring. Interacts with the chaperonin GroEL.

It is found in the cytoplasm. Together with the chaperonin GroEL, plays an essential role in assisting protein folding. The GroEL-GroES system forms a nano-cage that allows encapsulation of the non-native substrate proteins and provides a physical environment optimized to promote and accelerate protein folding. GroES binds to the apical surface of the GroEL ring, thereby capping the opening of the GroEL channel. In Alkalilimnicola ehrlichii (strain ATCC BAA-1101 / DSM 17681 / MLHE-1), this protein is Co-chaperonin GroES.